Here is a 310-residue protein sequence, read N- to C-terminus: tRNA dimethylallyltransferase (310 aa).

13–20 (GPTASGKT) is an ATP binding site. 15–20 (TASGKT) is a binding site for substrate. Interaction with substrate tRNA regions lie at residues 38-41 (DSAL), 162-166 (QRLSR), 243-248 (RCVGYR), and 276-283 (KRQITWLR).

The protein belongs to the IPP transferase family. As to quaternary structure, monomer. The cofactor is Mg(2+).

It carries out the reaction adenosine(37) in tRNA + dimethylallyl diphosphate = N(6)-dimethylallyladenosine(37) in tRNA + diphosphate. Catalyzes the transfer of a dimethylallyl group onto the adenine at position 37 in tRNAs that read codons beginning with uridine, leading to the formation of N6-(dimethylallyl)adenosine (i(6)A). In Vibrio parahaemolyticus serotype O3:K6 (strain RIMD 2210633), this protein is tRNA dimethylallyltransferase.